We begin with the raw amino-acid sequence, 507 residues long: Maturase K (507 aa).

This sequence belongs to the intron maturase 2 family. MatK subfamily.

It localises to the plastid. The protein resides in the chloroplast. In terms of biological role, usually encoded in the trnK tRNA gene intron. Probably assists in splicing its own and other chloroplast group II introns. This Lens ervoides (Beaded lentil) protein is Maturase K.